A 298-amino-acid polypeptide reads, in one-letter code: N-acetylmuramic acid 6-phosphate etherase (298 aa).

The 164-residue stretch at 55 to 218 (IHAQVSGGGR…STGLMIKSGK (164 aa)) folds into the SIS domain. The active-site Proton donor is the Glu-83. The active site involves Glu-114.

Belongs to the GCKR-like family. MurNAc-6-P etherase subfamily. As to quaternary structure, homodimer.

The enzyme catalyses N-acetyl-D-muramate 6-phosphate + H2O = N-acetyl-D-glucosamine 6-phosphate + (R)-lactate. Its pathway is amino-sugar metabolism; 1,6-anhydro-N-acetylmuramate degradation. The protein operates within amino-sugar metabolism; N-acetylmuramate degradation. It participates in cell wall biogenesis; peptidoglycan recycling. Functionally, specifically catalyzes the cleavage of the D-lactyl ether substituent of MurNAc 6-phosphate, producing GlcNAc 6-phosphate and D-lactate. Together with AnmK, is also required for the utilization of anhydro-N-acetylmuramic acid (anhMurNAc) either imported from the medium or derived from its own cell wall murein, and thus plays a role in cell wall recycling. This Escherichia coli O8 (strain IAI1) protein is N-acetylmuramic acid 6-phosphate etherase.